The sequence spans 327 residues: Selenate reductase subunit beta (327 aa).

4Fe-4S ferredoxin-type domains are found at residues 6 to 35 (LAYVFDLNKCIGCHTCTMACKQLWTNRDGR), 124 to 155 (NHYFYLPRICNHCSNPACLAACPTKAIYKREE), and 157 to 186 (GLVVVDQSRCKGYRYCVKACPYGKMYFNLQ). The [4Fe-4S] cluster site is built by Cys-15, Cys-18, Cys-21, Cys-25, Cys-133, Cys-136, and Cys-141. Positions 145, 166, and 172 each coordinate [3Fe-4S] cluster. 5 residues coordinate [4Fe-4S] cluster: Cys-176, Cys-193, Cys-196, Cys-208, and Cys-212.

In terms of assembly, heterotrimer of alpha (SerA), beta (SerB) and gamma (SerC) subunits. [3Fe-4S] cluster serves as cofactor. Requires [4Fe-4S] cluster as cofactor.

The protein localises to the periplasm. The catalysed reaction is selenite + 2 Fe(III)-[cytochrome c] + H2O = 2 Fe(II)-[cytochrome] + selenate + 2 H(+). With respect to regulation, enzyme isolated from cells grown in a tungstate rich environment shows a 20-fold reduction in selenate reductase activity. Its function is as follows. Component of the selenate reductase, which catalyzes the reduction of selenate to selenite and allows anaerobic growth with selenate as the sole terminal electron acceptor. A c-type di-heme cytochrome of the cytc4 family was shown to donate electrons to the selenate reductase in vitro. SerABC can also use reduced benzyl viologen or reduced methyl viologen as an electron donor. This subunit transfers electrons from SerC to SerA. The reductase is specific for selenate, and cannot reduce nitrate, nitrite, chlorate or sulfate. The chain is Selenate reductase subunit beta from Thauera selenatis.